A 459-amino-acid chain; its full sequence is MAGDESRSNPFSRRTLLRTSAAAGAGLGVAGLSTGYGAAQPVRPAKGESMMGVAFEAHETVRVGIIGVGNRGASMLPLFLAVPGVAITAVCDVSADAVNRAARAVTDAGHPEPAKYSAGEDDFENLLRRDDVDFAYVATPWEWHTPMALSAMRNGKHVGVECPAGTTVDELWELVDTSEKTRRHCIQLENCSYSQNEMRVLRMVHDGLFGQVLFGAGAYLHDLRELLFSKTYYAGQWRRAWHTGLNGDLYPTHGLGPVAAYMDINRGDRLVRITSMSTPAAGLAQYREQHMPAGDPTWNERYVKGDATISLIQTEAGRVVQLAHDVSNPRPYSRLNQLQGTNGVFEDYPARIYLEPTHSNDEWGDFAEFADYDHWLWKEVGPGPGGHGGMDYIMLYRLAQTMRLGLPPDIDVYDSATWSAPFALSVESVRRNSAPVDFPDFTRGRWQTPHPGVDSPKPA.

Positions 1 to 45 form a signal peptide, tat-type signal; the sequence is MAGDESRSNPFSRRTLLRTSAAAGAGLGVAGLSTGYGAAQPVRPA. NAD(+) contacts are provided by residues 70 to 71, Asp92, 141 to 144, 161 to 162, and Asn190; these read NR, WEWH, and EC. Substrate is bound by residues Tyr219, Arg238, 250–253, and Tyr332; that span reads YPTH. Tyr250 is an NAD(+) binding site. A disordered region spans residues 440–459; sequence DFTRGRWQTPHPGVDSPKPA.

It belongs to the Gfo/Idh/MocA family. Glycosyl hydrolase 109 subfamily. Requires NAD(+) as cofactor. Predicted to be exported by the Tat system. The position of the signal peptide cleavage has not been experimentally proven.

Glycosidase. The protein is Glycosyl hydrolase family 109 protein of Saccharopolyspora erythraea (strain ATCC 11635 / DSM 40517 / JCM 4748 / NBRC 13426 / NCIMB 8594 / NRRL 2338).